The primary structure comprises 577 residues: Peroxynitrite isomerase THAP4 (577 aa).

The THAP-type zinc finger occupies 1–85 (MVICCAAVNC…LKPTAVPSIF (85 aa)). The tract at residues 84-221 (IFHLTEKKRG…DKSGISMDDF (138 aa)) is disordered. Low complexity predominate over residues 157–170 (AAQEAASQEQAQQA). The residue at position 163 (S163) is a Phosphoserine. The HCFC1-binding motif (HBM) motif lies at 235 to 238 (LHSY). S239 is subject to Phosphoserine. A disordered region spans residues 240 to 324 (FSSKHTRERP…AVQSEHSDAS (85 aa)). Residues 247-266 (ERPSVPREPIDRKRLKKDVE) show a composition bias toward basic and acidic residues. Residues 290 to 300 (TATPQKPSQSP) are compositionally biased toward low complexity. Positions 415–577 (PPKMNPVVEP…LHVTYKKVTP (163 aa)) are nitrobindin. The heme b site is built by T444 and H567.

In the C-terminal section; belongs to the nitrobindin family. In terms of assembly, homodimer. Requires heme b as cofactor.

The protein localises to the cytoplasm. The protein resides in the nucleus. It carries out the reaction peroxynitrite = nitrate. The protein operates within nitrogen metabolism. Functionally, heme-binding protein able to scavenge peroxynitrite and to protect free L-tyrosine against peroxynitrite-mediated nitration, by acting as a peroxynitrite isomerase that converts peroxynitrite to nitrate. Therefore, this protein likely plays a role in peroxynitrite sensing and in the detoxification of reactive nitrogen and oxygen species (RNS and ROS, respectively). Is able to bind nitric oxide (NO) in vitro, but may act as a sensor of peroxynitrite levels in vivo, possibly modulating the transcriptional activity residing in the N-terminal region. The chain is Peroxynitrite isomerase THAP4 from Homo sapiens (Human).